A 542-amino-acid chain; its full sequence is MTRYIFVTGGVVSSLGKGIASASLAAILEARGLKVTMLKLDPYINVDPGTMSPFQHGEVFVTHDGAETDLDLGHYERFIRTTMTQNNNFTTGRIYEHVLRKERRGDYLGATIQVIPHITDEIKRRIIKGAGDADVALVEIGGTVGDIESQPFLEAIRQLRVEVGSKRAMLMHLTLVPYIATAGETKTKPTQHSVKELRSIGLQPDVLICRSDHPVDASSRRKIALFTNVEERAVISLEDVDTIYKIPGVLHAQGLDDFVVERFGLQCNSADLSEWDKVVDAKLNPEQEVTIAMVGKYMELLDAYKSLIEAMSHAGITNRTKVNLRYIDSEDIENQGTSLLEGADAILVPGGFGLRGVEGKITAVQYARENKVPYLGICLGMQVAVIEFARNVMGWKDANSTEFDRNSGHPVVGLITEWADATGAVETRTEASDLGGTMRLGAQDCQIVAGSKVHDCYGKDVITERHRHRYEVNNNLLPQLMDAGLVVSGRSEDGALVEVVESKDHPWFVACQFHPEFTSTPRDGHPLFSGFVKAALAQKNKA.

Residues 1–265 (MTRYIFVTGG…DDFVVERFGL (265 aa)) form an amidoligase domain region. S13 contacts CTP. S13 lines the UTP pocket. ATP contacts are provided by residues 14 to 19 (SLGKGI) and D71. Mg(2+) contacts are provided by D71 and E139. CTP-binding positions include 146–148 (DIE), 186–191 (KTKPTQ), and K222. UTP-binding positions include 186 to 191 (KTKPTQ) and K222. Residues 290 to 541 (TIAMVGKYME…VKAALAQKNK (252 aa)) form the Glutamine amidotransferase type-1 domain. Position 351 (G351) interacts with L-glutamine. The active-site Nucleophile; for glutamine hydrolysis is the C378. L-glutamine-binding positions include 379–382 (LGMQ), E402, and R469. Active-site residues include H514 and E516.

The protein belongs to the CTP synthase family. Homotetramer.

The enzyme catalyses UTP + L-glutamine + ATP + H2O = CTP + L-glutamate + ADP + phosphate + 2 H(+). It carries out the reaction L-glutamine + H2O = L-glutamate + NH4(+). It catalyses the reaction UTP + NH4(+) + ATP = CTP + ADP + phosphate + 2 H(+). The protein operates within pyrimidine metabolism; CTP biosynthesis via de novo pathway; CTP from UDP: step 2/2. Its activity is regulated as follows. Allosterically activated by GTP, when glutamine is the substrate; GTP has no effect on the reaction when ammonia is the substrate. The allosteric effector GTP functions by stabilizing the protein conformation that binds the tetrahedral intermediate(s) formed during glutamine hydrolysis. Inhibited by the product CTP, via allosteric rather than competitive inhibition. In terms of biological role, catalyzes the ATP-dependent amination of UTP to CTP with either L-glutamine or ammonia as the source of nitrogen. Regulates intracellular CTP levels through interactions with the four ribonucleotide triphosphates. The protein is CTP synthase of Pseudomonas entomophila (strain L48).